Here is a 297-residue protein sequence, read N- to C-terminus: N-acetylneuraminate lyase (297 aa).

Aceneuramate-binding residues include Ser-47 and Thr-48. The Proton donor role is filled by Tyr-137. The active-site Schiff-base intermediate with substrate is the Lys-165. Thr-167, Gly-189, Asp-191, Glu-192, and Ser-208 together coordinate aceneuramate.

This sequence belongs to the DapA family. NanA subfamily. As to quaternary structure, homotetramer.

The protein localises to the cytoplasm. It carries out the reaction aceneuramate = aldehydo-N-acetyl-D-mannosamine + pyruvate. It functions in the pathway amino-sugar metabolism; N-acetylneuraminate degradation; D-fructose 6-phosphate from N-acetylneuraminate: step 1/5. Catalyzes the reversible aldol cleavage of N-acetylneuraminic acid (sialic acid; Neu5Ac) to form pyruvate and N-acetylmannosamine (ManNAc) via a Schiff base intermediate. The chain is N-acetylneuraminate lyase from Shigella boydii serotype 4 (strain Sb227).